We begin with the raw amino-acid sequence, 303 residues long: METAAQNGSSNQTGTARVKRGMAEMLKGGVIMDVVTPEQARIAEAAGAVAVMALERVPADIRAQGGVSRMSDPDMIEGIIDAVTIPVMAKARIGHFVEAQILQSLGVDYVDESEVLTPADYTNHIDKWKFTVPFVCGATNLGEALRRITEGAAMIRSKGEAGTGDVSNATTHMRKIGGEIRRLTSMSEDELYVAAKELQAPYELVVEVARAGKLPVTLFTAGGIATPADAAMMMQLGAEGVFVGSGIFKSGNPEQRAAAIVKATTFYDDPDVLAKVSRGLGEAMVGINVEEIAQPHRLAERGW.

D33 is a D-ribose 5-phosphate binding site. Catalysis depends on K90, which acts as the Schiff-base intermediate with D-ribose 5-phosphate. Residue G162 participates in D-ribose 5-phosphate binding. R174 contacts D-glyceraldehyde 3-phosphate. D-ribose 5-phosphate-binding positions include G223 and G244–S245.

Belongs to the PdxS/SNZ family. As to quaternary structure, in the presence of PdxT, forms a dodecamer of heterodimers.

It carries out the reaction aldehydo-D-ribose 5-phosphate + D-glyceraldehyde 3-phosphate + L-glutamine = pyridoxal 5'-phosphate + L-glutamate + phosphate + 3 H2O + H(+). The protein operates within cofactor biosynthesis; pyridoxal 5'-phosphate biosynthesis. Catalyzes the formation of pyridoxal 5'-phosphate from ribose 5-phosphate (RBP), glyceraldehyde 3-phosphate (G3P) and ammonia. The ammonia is provided by the PdxT subunit. Can also use ribulose 5-phosphate and dihydroxyacetone phosphate as substrates, resulting from enzyme-catalyzed isomerization of RBP and G3P, respectively. This chain is Pyridoxal 5'-phosphate synthase subunit PdxS, found in Mycolicibacterium smegmatis (strain ATCC 700084 / mc(2)155) (Mycobacterium smegmatis).